A 908-amino-acid polypeptide reads, in one-letter code: Translation initiation factor IF-2 (908 aa).

A disordered region spans residues 52–318; sequence QSHGQEEKRR…RSSQSSQHKF (267 aa). Positions 65 to 84 are enriched in polar residues; the sequence is KSKTTSTARVTGSSGKSKSV. Composition is skewed to basic and acidic residues over residues 94–108, 120–138, 176–185, 193–238, 270–280, and 294–303; these read FEKP…ELAA, AAKD…EERQ, IEVKPKDQPK, PKVE…EQMR, SFEKERREIKR, and KNQDEREIKN. Positions 409–578 constitute a tr-type G domain; it reads TRPPVVTIMG…SLQAELMELE (170 aa). A G1 region spans residues 418 to 425; it reads GHVDHGKT. 418–425 lines the GTP pocket; it reads GHVDHGKT. The tract at residues 443–447 is G2; it reads GITQH. The segment at 464–467 is G3; sequence DTPG. Residues 464-468 and 518-521 each bind GTP; these read DTPGH and NKMD. Residues 518-521 form a G4 region; that stretch reads NKMD. The interval 554 to 556 is G5; that stretch reads SAK.

This sequence belongs to the TRAFAC class translation factor GTPase superfamily. Classic translation factor GTPase family. IF-2 subfamily.

The protein resides in the cytoplasm. Its function is as follows. One of the essential components for the initiation of protein synthesis. Protects formylmethionyl-tRNA from spontaneous hydrolysis and promotes its binding to the 30S ribosomal subunits. Also involved in the hydrolysis of GTP during the formation of the 70S ribosomal complex. This Psychrobacter cryohalolentis (strain ATCC BAA-1226 / DSM 17306 / VKM B-2378 / K5) protein is Translation initiation factor IF-2.